We begin with the raw amino-acid sequence, 599 residues long: Sulfite reductase [NADPH] flavoprotein alpha-component (599 aa).

The 139-residue stretch at 64 to 202 (ITIISASQTG…AASEWRARVV (139 aa)) folds into the Flavodoxin-like domain. FMN is bound by residues 70–75 (SQTGNA), 117–120 (STQG), and 153–162 (LGDSSYEFFC). One can recognise an FAD-binding FR-type domain in the interval 234-448 (DAPLVASLSV…IEHNDNFRLP (215 aa)). FAD-binding positions include Thr-322, Ala-356, 386–389 (RLYS), 404–406 (TVG), Tyr-410, and 419–422 (GGAS). NADP(+) contacts are provided by residues 519-520 (SR), 525-529 (KVYVQ), and Asp-561. Tyr-599 lines the FAD pocket.

The protein belongs to the NADPH-dependent sulphite reductase flavoprotein subunit CysJ family. In the N-terminal section; belongs to the flavodoxin family. This sequence in the C-terminal section; belongs to the flavoprotein pyridine nucleotide cytochrome reductase family. In terms of assembly, alpha(8)-beta(8). The alpha component is a flavoprotein, the beta component is a hemoprotein. It depends on FAD as a cofactor. The cofactor is FMN.

It catalyses the reaction hydrogen sulfide + 3 NADP(+) + 3 H2O = sulfite + 3 NADPH + 4 H(+). It functions in the pathway sulfur metabolism; hydrogen sulfide biosynthesis; hydrogen sulfide from sulfite (NADPH route): step 1/1. Component of the sulfite reductase complex that catalyzes the 6-electron reduction of sulfite to sulfide. This is one of several activities required for the biosynthesis of L-cysteine from sulfate. The flavoprotein component catalyzes the electron flow from NADPH -&gt; FAD -&gt; FMN to the hemoprotein component. The sequence is that of Sulfite reductase [NADPH] flavoprotein alpha-component from Escherichia coli O157:H7.